Reading from the N-terminus, the 418-residue chain is Galactooligosaccharides transport system permease protein GanP (418 aa).

9 helical membrane-spanning segments follow: residues 25 to 45 (IKGI…GDLL), 65 to 85 (VFLL…LAVY), 129 to 149 (LFIL…LAFT), 191 to 211 (VVWT…LAII), 226 to 246 (ILIL…AGLF), 279 to 299 (LILM…TGVL), 323 to 343 (YITL…QFTF), 357 to 379 (GGPA…IYKL), and 388 to 408 (LAAA…LWQF). Residues 187 to 407 (LAWTVVWTLA…VFVISIALWQ (221 aa)) enclose the ABC transmembrane type-1 domain.

The protein belongs to the binding-protein-dependent transport system permease family. In terms of assembly, the complex is composed of two ATP-binding proteins (MsmX), two transmembrane proteins (GanP and GanQ) and a solute-binding protein (GanS).

The protein resides in the cell membrane. In terms of biological role, involved in galactan degradation. Part of the ABC transporter complex GanPQS involved in the uptake of galactooligosaccharides. Responsible for the translocation of the substrate across the membrane. This is Galactooligosaccharides transport system permease protein GanP (ganP) from Bacillus subtilis (strain 168).